The chain runs to 240 residues: MPVSKCPKKSESLWKGWDRKAQKNGLRRQVYAVNGDYYVGEWKDNVKHGKGTQVWKKNGAIYEGDWKFGKRDGYGTLSLPDQQTGKCRRVYSGWWKGDKKSGYGIQFFGPKEYYEGEWCGSQRSGWGRMYYSNGDIYEGQWENDKPNGDGMLRLKNGNRYEGCWERGMKNGLGRFFHLDHGQLFEGFWVDNMAKCGTMIDFGRDEAPEPTQFPIPEVKILDPDGVLAQALAMFKKTEEGD.

Residues 6–35 are interaction with MDM2; the sequence is CPKKSESLWKGWDRKAQKNGLRRQVYAVNG. 7 MORN repeats span residues 38 to 60, 62 to 84, 91 to 113, 114 to 136, 137 to 159, 160 to 182, and 184 to 205; these read YVGEWKDNVKHGKGTQVWKKNGA, YEGDWKFGKRDGYGTLSLPDQQT, YSGWWKGDKKSGYGIQFFGPKEY, YEGEWCGSQRSGWGRMYYSNGDI, YEGQWENDKPNGDGMLRLKNGNR, YEGCWERGMKNGLGRFFHLDHGQ, and FEGFWVDNMAKCGTMIDFGRDE. Residues 76–100 are interaction with SIRT1; the sequence is TLSLPDQQTGKCRRVYSGWWKGDKK. Positions 206–240 are interaction with TP53; that stretch reads APEPTQFPIPEVKILDPDGVLAQALAMFKKTEEGD.

As to quaternary structure, interacts with MEIG1. Interacts with TP53, MDM2 and SIRT1; the interactions mediate post-transcriptional modifications of TP53 by MDM2 and SIRT1.

It is found in the cytoplasmic vesicle. The protein localises to the secretory vesicle. Its subcellular location is the acrosome. In terms of biological role, assembles a suppression complex (suppresome) by tethering SIRT1 and MDM2 to regulate composite modifications of p53/TP53. Confers both deacetylation-mediated functional inactivation, by SIRT1, and ubiquitination-dependent degradation, by MDM2, of p53/TP53, promoting a proliferative and cell survival behaviors. May play a role in the regulation of spermatogenesis. This chain is MORN repeat-containing protein 3 (MORN3), found in Macaca fascicularis (Crab-eating macaque).